Here is a 177-residue protein sequence, read N- to C-terminus: Ribulose bisphosphate carboxylase small subunit, chloroplastic 5 (177 aa).

The transit peptide at 1 to 56 (MASSMMASTAAVARAGPAQSSMVAPFNGLRSSVAFPATRKANNDLSTLPSNGGRVS) directs the protein to the chloroplast.

The protein belongs to the RuBisCO small chain family. As to quaternary structure, heterohexadecamer of 8 large and 8 small subunits.

The protein resides in the plastid. It localises to the chloroplast. RuBisCO catalyzes two reactions: the carboxylation of D-ribulose 1,5-bisphosphate, the primary event in carbon dioxide fixation, as well as the oxidative fragmentation of the pentose substrate. Both reactions occur simultaneously and in competition at the same active site. Although the small subunit is not catalytic it is essential for maximal activity. This is Ribulose bisphosphate carboxylase small subunit, chloroplastic 5 from Lemna gibba (Swollen duckweed).